The sequence spans 365 residues: Galactoside alpha-(1,2)-fucosyltransferase 1 (365 aa).

Over 1–8 (MWPLSHRH) the chain is Cytoplasmic. Residues 9 to 25 (LCLAFLLVCVLSAISFF) traverse the membrane as a helical; Signal-anchor for type II membrane protein segment. At 26–365 (LHLYQDSIRH…LSPLWTLAEP (340 aa)) the chain is on the lumenal side. N-linked (GlcNAc...) asparagine glycosylation is found at Asn-65, Asn-301, and Asn-327.

It belongs to the glycosyltransferase 11 family.

The protein resides in the golgi apparatus. It is found in the golgi stack membrane. The enzyme catalyses a beta-D-galactosyl-(1-&gt;4)-N-acetyl-beta-D-glucosaminyl derivative + GDP-beta-L-fucose = an alpha-L-Fuc-(1-&gt;2)-beta-D-Gal-(1-&gt;4)-beta-D-GlcNAc derivative + GDP + H(+). It carries out the reaction a ganglioside GA1 + GDP-beta-L-fucose = a ganglioside Fuc-GA1 + GDP + H(+). The catalysed reaction is a beta-D-Gal-(1-&gt;3)-beta-D-GlcNAc-(1-&gt;3)-beta-D-Gal-(1-&gt;4)-beta-D-Glc-(1&lt;-&gt;1')-Cer(d18:1(4E)) + GDP-beta-L-fucose = alpha-L-fucosyl-(1-&gt;2)- beta-D-galactosyl-(1-&gt;3)-N-acetyl-beta-D-glucosaminyl-(1-&gt;3)-beta-D-galactosyl-(1-&gt;4)-beta-D-glucosyl-(1&lt;-&gt;1')-N-acylsphing-4-enine + GDP + H(+). It catalyses the reaction a neolactoside nLc4Cer(d18:1(4E)) + GDP-beta-L-fucose = a neolactoside IV(2)-alpha-Fuc-nLc4Cer(d18:1(4E)) + GDP + H(+). The enzyme catalyses a ganglioside GM1 + GDP-beta-L-fucose = a ganglioside Fuc-GM1 + GDP + H(+). It carries out the reaction beta-D-galactosyl-(1-&gt;3)-N-acetyl-D-galactosamine + GDP-beta-L-fucose = alpha-L-fucosyl-(1-&gt;2)-beta-D-galactosyl-(1-&gt;3)-N-acetyl-D-galactosamine + GDP + H(+). It functions in the pathway protein modification; protein glycosylation. Catalyzes the transfer of L-fucose, from a guanosine diphosphate-beta-L-fucose, to the terminal galactose residue of glycoconjugates through an alpha(1,2) linkage leading to H antigen synthesis that is an intermediate substrate in the synthesis of ABO blood group antigens. H antigen is essential for maturation of the glomerular layer of the main olfactory bulb, in cell migration and early cell-cell contacts during tumor associated angiogenesis. Preferentially fucosylates soluble lactose and to a lesser extent fucosylates glycolipids gangliosides GA1 and GM1a. The chain is Galactoside alpha-(1,2)-fucosyltransferase 1 from Leontopithecus chrysomelas (Golden-headed lion tamarin).